A 59-amino-acid polypeptide reads, in one-letter code: Cortexin domain containing 2 (59 aa).

Residues 20 to 40 form a helical membrane-spanning segment; sequence FAIAFVVLVFVFLIVMVFRCV.

Its subcellular location is the membrane. The protein is Cortexin domain containing 2 of Mus musculus (Mouse).